The sequence spans 1373 residues: MVLLRDNIEVQPLSNNRRIRKNFGHINLVADIPNLIEIQKNSYEKNFLQLNIKDSERKNKGLQSILNSIFPISDSSNIANLEFVKYEFDTPKYDVEECSQRSLSYAAPLKVTLRLSIWDIDEDTGTREIKGIKEQEVYMGDIPLMTKNGTFIINGTERVVVSQMHRSPGVFFYHDEGKIHSSGKLLYSARVIPYRGSWLDLEFDAKDIIYFRIDRKRKLYATTLLRAIGMSTEEIIKFYYNSVTYKLVQNKGWAVKFMPGHITAHRLTSDLVDADTGNVLLKAGQKITPRLAQKYFREGLNNVLVARETLIGKYLSEDLRDPVSDEILAKIGEMITADMLNVINDLKIKNVNVLVVNPQSGPYIRNTLFADKNQDRETALCDIFRVLRPGEPANIEAAEGLFYNLFFDAERYDLSEVGRIKMNSRLELNISEEVTVLTIDDIKNIVRVLVELKDGKGIIDDIDHLGNRRVRSVGELIENQFRIGLVRMEKSVIERMSAGDVDTLMPHDLVNSKILVSVVKEFFSTSQLSQFMDQTNPLSEITHKRRLSALGPGGLSRDRAGFEVRDVHPTHYGRICPIETPEGQNIGLINSMATYARINKHGFIESPYRRVKDGRVTDEVVYLSAIEEGKYKIGQANSKVDKDGVLQGEFINCRVEGGNFVMVEPHEVDFIDVTPMQVVSVAASLIPFLENDDANRALMGSNMQRQAVPLIKTDAPFVGTGVEGVVAKDSGASVLALHDGIVEQVDSNRIVIRTLAQKADGSPSVDIYNLLKFQKSNHNTCINQKPLVKVGHYVKKNDIIADGPSTDNGEIALGRNVLVAFLPWNGYNFEDSILISERIVKEDIFTSIHIEEFEVIARDTRLGPEEITRDIPNVSEEALSHLDEVGIIYVGAEVKAGDILVGKVTPKSESPITPEEKLLRAIFGEKAFDVKDSSLHVPSGVSGTVVEVRIFSRRGVEKDQRAIAIEKQQIEKLAKDRDDELEIVEHFVFSWLEKLLVGQVIINGPKQVKAGQTITTEVLKGLSKGQFWQLTVEDANIMNEIEQIKTHYDEKKEALNKRFATKVEKLQSGDDLPQGALKVVKVFIATKHKLQPGDKMAGRHGNKGVISRIVPEEDMPFLEDGTVVDIVLNPLGLPSRMNIGQILETHLGWASINLAKKISTLVQEYQNKKIAIEQIKKFLIKLYGENINSVLERSEEEIISFCKKVSKGVHFATPVFDGAKVQDVKDMLKLADQDPSGQVKLIDGRTGEYFDRLVTVGQKYLLKLHHLVDNKIHSRSIGPYSLVTQQPLGGKSHFGGQRFGEMECWALQAYGAAYTLQEMLTVKSDDVNGRIKTYDSIVRGENNFESGIPESFNVMIKEFRSLCLNVKLEVTSS.

It belongs to the RNA polymerase beta chain family. In terms of assembly, the RNAP catalytic core consists of 2 alpha, 1 beta, 1 beta' and 1 omega subunit. When a sigma factor is associated with the core the holoenzyme is formed, which can initiate transcription.

It carries out the reaction RNA(n) + a ribonucleoside 5'-triphosphate = RNA(n+1) + diphosphate. DNA-dependent RNA polymerase catalyzes the transcription of DNA into RNA using the four ribonucleoside triphosphates as substrates. The chain is DNA-directed RNA polymerase subunit beta from Rickettsia canadensis (strain McKiel).